The primary structure comprises 778 residues: Molybdenum cofactor sulfurase (778 aa).

Lysine 235 is subject to N6-(pyridoxal phosphate)lysine. Cysteine 399 is an active-site residue. Disordered stretches follow at residues 576–596 and 654–673; these read LSKN…SRVC and ARPA…DTEK. The span at 584 to 594 shows a compositional bias: low complexity; that stretch reads RSSSSRSRSSR. The 128-residue stretch at 651–778 folds into the MOSC domain; sequence LPTARPALPG…ETAERARSRL (128 aa).

This sequence belongs to the class-V pyridoxal-phosphate-dependent aminotransferase family. MOCOS subfamily. Requires pyridoxal 5'-phosphate as cofactor.

The enzyme catalyses Mo-molybdopterin + L-cysteine + AH2 = thio-Mo-molybdopterin + L-alanine + A + H2O. Its pathway is cofactor biosynthesis; molybdopterin biosynthesis. In terms of biological role, sulfurates the molybdenum cofactor. Sulfation of molybdenum is essential for xanthine dehydrogenase (XDH) and aldehyde oxidase (ADO) enzymes in which molybdenum cofactor is liganded by 1 oxygen and 1 sulfur atom in active form. The polypeptide is Molybdenum cofactor sulfurase (Chaetomium globosum (strain ATCC 6205 / CBS 148.51 / DSM 1962 / NBRC 6347 / NRRL 1970) (Soil fungus)).